A 220-amino-acid polypeptide reads, in one-letter code: Fibroblast growth factor 3 (220 aa).

The N-terminal stretch at 1–19 is a signal peptide; it reads MLVIWLLLLALLPEPRVPA. The interval 19–40 is disordered; the sequence is AATASPRAPRDAGGRGGVYEHL. N-linked (GlcNAc...) asparagine glycosylation is present at Asn66.

This sequence belongs to the heparin-binding growth factors family.

The protein resides in the secreted. Plays an important role in the regulation of embryonic development, cell proliferation, and cell differentiation. The sequence is that of Fibroblast growth factor 3 (FGF3) from Gallus gallus (Chicken).